A 378-amino-acid polypeptide reads, in one-letter code: Actin-related protein 2/3 complex subunit 1A (378 aa).

WD repeat units lie at residues 8–47 (RFAE…HWER), 53–92 (KHDQ…WVPT), 97–138 (RLNR…WVSK), 143–182 (RHES…VDTK), 203–242 (LSYS…PLAQ), 257–295 (ISEK…KAAS), and 331–375 (VHDN…QELG).

This sequence belongs to the WD repeat ARPC1 family. In terms of assembly, component of the Arp2/3 complex composed of ARP2, ARP3, ARPC1/p41-ARC, ARPC2/p34-ARC, ARPC3/p21-ARC, ARPC4/p20-ARC and ARPC5/p16-ARC. Expressed at low levels in all tissues with a relatively highest expression in inflorescences.

Its subcellular location is the cytoplasm. The protein localises to the cytoskeleton. In terms of biological role, functions as a component of the Arp2/3 complex which is involved in regulation of actin polymerization and together with an activating nucleation-promoting factor (NPF) mediates the formation of branched actin networks. Arp2/3 complex plays a critical role in the control of cell morphogenesis via the modulation of cell polarity development. This Arabidopsis thaliana (Mouse-ear cress) protein is Actin-related protein 2/3 complex subunit 1A (ARPC1A).